The following is a 347-amino-acid chain: Anthranilate phosphoribosyltransferase (347 aa).

Residues G88, 91–92, T96, 98–101, 116–124, and S128 each bind 5-phospho-alpha-D-ribose 1-diphosphate; these read GD, NIST, and KHGNRSVSS. G88 lines the anthranilate pocket. S100 is a binding site for Mg(2+). Residue N119 coordinates anthranilate. Residue R174 coordinates anthranilate. D232 and E233 together coordinate Mg(2+).

The protein belongs to the anthranilate phosphoribosyltransferase family. Homodimer. Mg(2+) is required as a cofactor.

The catalysed reaction is N-(5-phospho-beta-D-ribosyl)anthranilate + diphosphate = 5-phospho-alpha-D-ribose 1-diphosphate + anthranilate. It functions in the pathway amino-acid biosynthesis; L-tryptophan biosynthesis; L-tryptophan from chorismate: step 2/5. Its function is as follows. Catalyzes the transfer of the phosphoribosyl group of 5-phosphorylribose-1-pyrophosphate (PRPP) to anthranilate to yield N-(5'-phosphoribosyl)-anthranilate (PRA). In Shewanella sp. (strain MR-7), this protein is Anthranilate phosphoribosyltransferase.